Here is a 1178-residue protein sequence, read N- to C-terminus: MASGSRATPTRSPSSARPEAPRHAHHHHHHHSQSSGGSTSRAGGGGGGGGGGGGTAATATATATESVSKAVAQYTLDARLHAVFEQSGASGRSFDYSQSLRAPPTPSSEQQIAAYLSRIQRGGHIQPFGCTLAVADDSSFRLLAFSENAADLLDLSPHHSVPSLDSAAPPPVSLGADARLLFSPSSAVLLERAFAAREISLLNPLWIHSRVSSKPFYAILHRIDVGVVIDLEPARTEDPALSIAGAVQSQKLAVRAISRLQALPGGDIKLLCDTVVEHVRELTGYDRVMVYRFHEDEHGEVVAESRRDNLEPYLGLHYPATDIPQASRFLFRQNRVRMIADCHATPVRVIQDPGMSQPLCLVGSTLRAPHGCHAQYMANMGSIASLVMAVIISSGGDDEQTGRGGISSAMKLWGLVVCHHTSPRCIPFPLRYACEFLMQAFGLQLNMELQLAHQLSEKHILRTQTLLCDMLLRDSPTGIVTQSPSIMDLVKCDGAALYYHGKYYPLGVTPTESQIKDIIEWLTVCHGDSTGLSTDSLADAGYLGAAALGDAVCGMAVAYITPSDYLFWFRSHTAKEIKWGGAKHHPEDKDDGQRMHPRSSFKAFLEVVKSRSLPWENAEMDAIHSLQLILRDSFRDAAEGTSNSKAIVNGQVQLGELELRGINELSSVAREMVRLIETATVPIFAVDTDGCINGWNAKIAELTGLSVEEAMGKSLVNDLIFKESEEIVEKLLSRALRGEEDKNVEIKLKTFGSEQSNGAIFVIVNACSSRDYTQNIVGVCFVGQDVTGQKVVMDKFINIQGDYKAIVHNPNPLIPPIFASDENTSCSEWNTAMEKLTGWSRGEVVGKFLIGEVFGSFCRLKGPDALTKFMVVIHNAIGGQDYEKFPFSFFDKNGKYVQALLTANTRSKMDGKSIGAFCFLQIASAEIQQAFEIQRQQEKKCYARMKELAYICQEIKNPLSGIRFTNSLLQMTDLNDDQRQFLETCSACEKQMSKIVKDATLQSIEDGSLVLEKSEFSFGDVMNAVVSQAMLLLRERDLQLIRDIPDEIKDASAYGDQFRIQQVLADFLLSMVRSAPSENGWVEIQVRPNVKQNSDGTDTELFIFRFACPGEGLPADIVQDMFSNSQWSTQEGVGLSTCRKILKLMGGEVQYIRESERSFFLIVLELPQPRPAADREIS.

Residues 1-15 (MASGSRATPTRSPSS) are compositionally biased toward polar residues. Residues 1–58 (MASGSRATPTRSPSSARPEAPRHAHHHHHHHSQSSGGSTSRAGGGGGGGGGGGGTAAT) form a disordered region. Residues 23–32 (HAHHHHHHHS) are compositionally biased toward basic residues. The segment covering 42–55 (AGGGGGGGGGGGGT) has biased composition (gly residues). The GAF domain occupies 267–449 (DIKLLCDTVV…AFGLQLNMEL (183 aa)). C372 is a phytochromobilin binding site. PAS domains follow at residues 668–739 (VARE…LRGE) and 802–873 (DYKA…MVVI). One can recognise a Histidine kinase domain in the interval 950–1170 (YICQEIKNPL…LIVLELPQPR (221 aa)).

Belongs to the phytochrome family. Homodimer. Post-translationally, contains one covalently linked phytochromobilin chromophore.

Regulatory photoreceptor which exists in two forms that are reversibly interconvertible by light: the Pr form that absorbs maximally in the red region of the spectrum and the Pfr form that absorbs maximally in the far-red region. Photoconversion of Pr to Pfr induces an array of morphogenic responses, whereas reconversion of Pfr to Pr cancels the induction of those responses. Pfr controls the expression of a number of nuclear genes including those encoding the small subunit of ribulose-bisphosphate carboxylase, chlorophyll A/B binding protein, protochlorophyllide reductase, rRNA, etc. It also controls the expression of its own gene(s) in a negative feedback fashion. This is Phytochrome B (PHYB) from Sorghum bicolor (Sorghum).